Consider the following 240-residue polypeptide: Probable 2-phosphosulfolactate phosphatase (240 aa).

Belongs to the ComB family. Mg(2+) serves as cofactor.

The enzyme catalyses (2R)-O-phospho-3-sulfolactate + H2O = (2R)-3-sulfolactate + phosphate. The chain is Probable 2-phosphosulfolactate phosphatase from Clostridium kluyveri (strain NBRC 12016).